Reading from the N-terminus, the 192-residue chain is dTTP/UTP pyrophosphatase (192 aa).

Residue D65 is the Proton acceptor of the active site.

Belongs to the Maf family. YhdE subfamily. Requires a divalent metal cation as cofactor.

The protein resides in the cytoplasm. The enzyme catalyses dTTP + H2O = dTMP + diphosphate + H(+). It carries out the reaction UTP + H2O = UMP + diphosphate + H(+). In terms of biological role, nucleoside triphosphate pyrophosphatase that hydrolyzes dTTP and UTP. May have a dual role in cell division arrest and in preventing the incorporation of modified nucleotides into cellular nucleic acids. This Fusobacterium nucleatum subsp. nucleatum (strain ATCC 25586 / DSM 15643 / BCRC 10681 / CIP 101130 / JCM 8532 / KCTC 2640 / LMG 13131 / VPI 4355) protein is dTTP/UTP pyrophosphatase.